A 420-amino-acid chain; its full sequence is Vasopressin V1a receptor (420 aa).

Positions 1–45 are disordered; the sequence is MSFPRGSYDPAASNSSPRWPLSAEDANSSREAAGHQKGSDPSGDV. The Extracellular portion of the chain corresponds to 1–54; sequence MSFPRGSYDPAASNSSPRWPLSAEDANSSREAAGHQKGSDPSGDVRNEELAKLE. An N-linked (GlcNAc...) asparagine glycan is attached at asparagine 27. The segment covering 32–45 has biased composition (basic and acidic residues); that stretch reads AAGHQKGSDPSGDV. The helical transmembrane segment at 55-75 threads the bilayer; the sequence is IAVLAVIFVVAVLGNSSVLLA. Topologically, residues 76–92 are cytoplasmic; sequence LHRTPRKTSRMHLFIRH. A helical transmembrane segment spans residues 93–113; sequence LSLADLAVAFFQVLPQLCWDI. Over 114-125 the chain is Extracellular; it reads TYRFRGPDWLCR. Cysteine 124 and cysteine 205 are disulfide-bonded. Residues 126-146 form a helical membrane-spanning segment; sequence VVKHLQVFAMFASAYMLVVMT. Over 147 to 168 the chain is Cytoplasmic; that stretch reads ADRYIAVCHPLKTLQQPARRSR. A helical membrane pass occupies residues 169-189; the sequence is LMIAASWVLSFLLSTPQYFIF. Residues 190–225 lie on the Extracellular side of the membrane; that stretch reads SMIEIEVNNGTKTQDCWATFIQPWGTRAYVTWMTSG. Asparagine 198 carries an N-linked (GlcNAc...) asparagine glycan. The chain crosses the membrane as a helical span at residues 226 to 246; it reads VFVVPVVILGTCYGFICYHIW. The Cytoplasmic portion of the chain corresponds to 247-294; sequence RNVRGKTASRQSKGSGEDVAPFHKGLLVTPCVSSVKTISRAKIRTVKM. The helical transmembrane segment at 295–315 threads the bilayer; it reads TFVIVTAYILCWAPFFIVQMW. Topologically, residues 316-331 are extracellular; it reads SVWDDNFIWTDSENPS. Residues 332–352 traverse the membrane as a helical segment; the sequence is ITITALLASLNSCCNPWIYMF. At 353–420 the chain is on the cytoplasmic side; that stretch reads FSGHLLQDCV…RSIRFIPVST (68 aa). S-palmitoyl cysteine attachment occurs at residues cysteine 367 and cysteine 368. The interval 379–411 is disordered; the sequence is DSDNMSRRQTSYSNNRSPTNSTGTWKDSPKSSR. The span at 385 to 403 shows a compositional bias: polar residues; the sequence is RRQTSYSNNRSPTNSTGTW. Serine 406 carries the phosphoserine modification.

It belongs to the G-protein coupled receptor 1 family. Vasopressin/oxytocin receptor subfamily.

The protein localises to the cell membrane. Functionally, receptor for arginine vasopressin. The activity of this receptor is mediated by G proteins which activate a phosphatidyl-inositol-calcium second messenger system. Involved in social memory formation. This chain is Vasopressin V1a receptor (Avpr1a), found in Microtus montanus (Montane vole).